The primary structure comprises 627 residues: (-)-alpha-pinene synthase 2, chloroplastic (627 aa).

A chloroplast-targeting transit peptide spans 1–36; the sequence is MALVSIAPLASKSCLHKSLSSSAHELKTICRTIPTL. Mg(2+)-binding residues include D378, D382, and D530. The DDXXD motif motif lies at 378-382; that stretch reads DDMYD.

The protein belongs to the terpene synthase family. Tpsd subfamily. Mg(2+) is required as a cofactor. The cofactor is Mn(2+).

It localises to the plastid. It is found in the chloroplast. It catalyses the reaction (2E)-geranyl diphosphate = (1S,5S)-beta-pinene + diphosphate. The catalysed reaction is (2E)-geranyl diphosphate = (1S,5S)-alpha-pinene + diphosphate. It functions in the pathway terpene metabolism; oleoresin biosynthesis. Its function is as follows. Terpene synthase (TPS) involved in the biosynthesis of monoterpene natural products included in conifer oleoresin secretions and volatile emissions; these compounds contribute to biotic and abiotic stress defense against herbivores and pathogens. Catalyzes the conversion of (2E)-geranyl diphosphate (GPP) to (1S,5S)-beta-pinene. The chain is (-)-alpha-pinene synthase 2, chloroplastic from Picea glauca (White spruce).